Consider the following 709-residue polypeptide: Fatty acid oxidation complex subunit alpha (709 aa).

Residues methionine 1–proline 188 are enoyl-CoA hydratase. Residues arginine 308 to phenylalanine 709 are 3-hydroxyacyl-CoA dehydrogenase.

The protein in the N-terminal section; belongs to the enoyl-CoA hydratase/isomerase family. It in the central section; belongs to the 3-hydroxyacyl-CoA dehydrogenase family. Heterotetramer of two alpha chains (FadJ) and two beta chains (FadI).

Its subcellular location is the cytoplasm. The catalysed reaction is a (3S)-3-hydroxyacyl-CoA = a (2E)-enoyl-CoA + H2O. It carries out the reaction a 4-saturated-(3S)-3-hydroxyacyl-CoA = a (3E)-enoyl-CoA + H2O. The enzyme catalyses a (3S)-3-hydroxyacyl-CoA + NAD(+) = a 3-oxoacyl-CoA + NADH + H(+). It catalyses the reaction (3S)-3-hydroxybutanoyl-CoA = (3R)-3-hydroxybutanoyl-CoA. Its pathway is lipid metabolism; fatty acid beta-oxidation. Functionally, catalyzes the formation of a hydroxyacyl-CoA by addition of water on enoyl-CoA. Also exhibits 3-hydroxyacyl-CoA epimerase and 3-hydroxyacyl-CoA dehydrogenase activities. This Shewanella sp. (strain MR-4) protein is Fatty acid oxidation complex subunit alpha.